The primary structure comprises 186 residues: MGRYAKEPDNPAKSCKARGSNLRVHFKNTRETALAIKRMPLRRAQKFLKNVCEKKECVPFRRFNGGVGRCAQAKHWNTSVGRWPKKSAEFLLQLLKNAEANADYRGLDVDRLVVDHIQVNRAPCLRRRTYRAHGRINPYMSSPCHIELSLTEKEDVVSKAAENEPAKKKLSKKKLQRQKEKMMRNE.

The segment at 159 to 186 is disordered; that stretch reads KAAENEPAKKKLSKKKLQRQKEKMMRNE. Residues 177–186 are compositionally biased toward basic and acidic residues; the sequence is RQKEKMMRNE.

It belongs to the universal ribosomal protein uL22 family.

This is Large ribosomal subunit protein uL22 (RpL17) from Aedes albopictus (Asian tiger mosquito).